The primary structure comprises 1220 residues: DNA-directed RNA polymerase subunit beta' (1220 aa).

Zn(2+) is bound by residues C60, C62, C75, and C78. The Mg(2+) site is built by D449, D451, and D453. Residues C818, C892, C899, and C902 each contribute to the Zn(2+) site.

It belongs to the RNA polymerase beta' chain family. As to quaternary structure, the RNAP catalytic core consists of 2 alpha, 1 beta, 1 beta' and 1 omega subunit. When a sigma factor is associated with the core the holoenzyme is formed, which can initiate transcription. The cofactor is Mg(2+). It depends on Zn(2+) as a cofactor.

The enzyme catalyses RNA(n) + a ribonucleoside 5'-triphosphate = RNA(n+1) + diphosphate. Its function is as follows. DNA-dependent RNA polymerase catalyzes the transcription of DNA into RNA using the four ribonucleoside triphosphates as substrates. The chain is DNA-directed RNA polymerase subunit beta' from Lacticaseibacillus paracasei (strain ATCC 334 / BCRC 17002 / CCUG 31169 / CIP 107868 / KCTC 3260 / NRRL B-441) (Lactobacillus paracasei).